We begin with the raw amino-acid sequence, 704 residues long: MAKITKTFQYGKHTVTLETGEVARQASGAVIVKMDDTVLLVTAVAAKTAREGQDFFPLTVDYQEKFYAGGRIPGGFFKREGRATEKETLISRLIDRPIRPLFPEDYKNEVQIIATVMSMNPDIDGDIAALIGASAALSLAGTPFNGPIGAAKVGYKNGEYILNPTITELKDSQLELVVAGTANAVLMVESEAALLSEEVMLGAVTFGHREMQKVINIINELTVEAGTKPSTWVAPAKNTALISALKEAVGTQLAGAFQVRDKLQRRDAISAIKKDVLESLAGRVASEGWSSAELSKEFGELEYHTMRDSVLETKVRIDGRALDTVRPISVQAGVLPRTHGSALFTRGETQAIVVTTLGTARDGQVIDAVAGEYKENFLFHYNFPPYSVGECGRFGAPKRREIGHGRLAKRGVLAVMPSLEEFPYTIRVVSEITESNGSSSMASVCGSSLALMDAGVPVKAPVAGIAMGLVKEDDRFVVLSDILGDEDHLGDMDFKVAGTAEGVSALQMDIKIEGITEEIMKQALQQAKAGRLHILGEMSKALTTPRQELSDYAPRLLTIKIHPDKIREVIGKGGSTIQAITKETGTQIDIQDDGTIIIASVNAIAAQAAKSRIEQITSDVEPGRIYEGKVAKIMDFGAFVTILPGKDGLVHVSQISSERVEKVGDKLKEGDLVRVKVLEVDKQGRIRLSIKAVEEGEGVPASAE.

Residues Asp-487 and Asp-493 each contribute to the Mg(2+) site. In terms of domain architecture, KH spans 554–613 (PRLLTIKIHPDKIREVIGKGGSTIQAITKETGTQIDIQDDGTIIIASVNAIAAQAAKSRI). The S1 motif domain occupies 623 to 691 (GRIYEGKVAK…KQGRIRLSIK (69 aa)).

The protein belongs to the polyribonucleotide nucleotidyltransferase family. Component of the RNA degradosome, which is a multiprotein complex involved in RNA processing and mRNA degradation. Mg(2+) is required as a cofactor.

It localises to the cytoplasm. The catalysed reaction is RNA(n+1) + phosphate = RNA(n) + a ribonucleoside 5'-diphosphate. Involved in mRNA degradation. Catalyzes the phosphorolysis of single-stranded polyribonucleotides processively in the 3'- to 5'-direction. This is Polyribonucleotide nucleotidyltransferase from Xanthomonas campestris pv. campestris (strain 8004).